A 93-amino-acid chain; its full sequence is Phosphoribosyl-ATP pyrophosphatase (93 aa).

Belongs to the PRA-PH family.

The protein resides in the cytoplasm. The catalysed reaction is 1-(5-phospho-beta-D-ribosyl)-ATP + H2O = 1-(5-phospho-beta-D-ribosyl)-5'-AMP + diphosphate + H(+). Its pathway is amino-acid biosynthesis; L-histidine biosynthesis; L-histidine from 5-phospho-alpha-D-ribose 1-diphosphate: step 2/9. The sequence is that of Phosphoribosyl-ATP pyrophosphatase from Rhodococcus jostii (strain RHA1).